Here is a 478-residue protein sequence, read N- to C-terminus: MARKTLRARRFFSLIFPFFFITSVYAEQTPVSAKTVTVEAKNETFAPQHPDQYQSWKATSEQSAREDALAEDPRLVILWAGYPFSRDYNKPRGHAYAVTDVRETLRTGAPKTAEDGPLPMACWSCKSPDVALLIQQEGEDGYFHGKWARGGPEIVNDLGCADCHNTASDDFAQGKPALTLSRPYAERAMEAISKPFDKAGRFDQQSMVCGQCHVEYYFDGKNKAVKFPWDEGMKVENMEQYYDAIAFSDWTNSLSKTPMLKAQHPEYETWSAGIHGKNNVTCIDCHMPKVQNAEGKLYTDHKIGNPFDNFAQTCANCHTQDKASLQKVVAERKQAIHDLKIKVEDQLVHAHFEAKAAWDAGATDAEMKPILNDIRHAQWRWDLAIASHGIHMHAPEEGLRMLGSAMDKAADARTKLARLLATKGITHEIPLPDISTKEKAQKAIGLNMQQINAEKQDFLKTVVPQWEDQARKNSLLSQ.

The first 26 residues, 1-26, serve as a signal peptide directing secretion; that stretch reads MARKTLRARRFFSLIFPFFFITSVYA. Position 94 (His-94) interacts with heme c. 3 residues coordinate heme: Cys-122, Cys-125, and Lys-126. Heme c is bound by residues Cys-160, Cys-163, His-164, Cys-209, Cys-212, and His-213. Ca(2+)-binding residues include Glu-215, Tyr-216, Lys-261, and Gln-263. Tyr-216 contacts substrate. Position 264 (His-264) interacts with substrate. His-275, Cys-282, Cys-285, His-286, His-301, Cys-314, Cys-317, His-318, and His-393 together coordinate heme c.

The protein belongs to the cytochrome c-552 family. Requires Ca(2+) as cofactor. It depends on heme c as a cofactor.

It is found in the periplasm. The catalysed reaction is 6 Fe(III)-[cytochrome c] + NH4(+) + 2 H2O = 6 Fe(II)-[cytochrome c] + nitrite + 8 H(+). Its pathway is nitrogen metabolism; nitrate reduction (assimilation). Functionally, catalyzes the reduction of nitrite to ammonia, consuming six electrons in the process. This is Cytochrome c-552 from Salmonella paratyphi A (strain ATCC 9150 / SARB42).